The sequence spans 227 residues: Octanoyltransferase (227 aa).

Positions 35–222 constitute a BPL/LPL catalytic domain; sequence EAYENRIIMC…ELGRLLNEKK (188 aa). Substrate-binding positions include 80–87, 152–154, and 165–167; these read RGGDITYH, AIG, and GLA. Catalysis depends on cysteine 183, which acts as the Acyl-thioester intermediate.

The protein belongs to the LipB family.

Its subcellular location is the cytoplasm. It carries out the reaction octanoyl-[ACP] + L-lysyl-[protein] = N(6)-octanoyl-L-lysyl-[protein] + holo-[ACP] + H(+). It functions in the pathway protein modification; protein lipoylation via endogenous pathway; protein N(6)-(lipoyl)lysine from octanoyl-[acyl-carrier-protein]: step 1/2. Catalyzes the transfer of endogenously produced octanoic acid from octanoyl-acyl-carrier-protein onto the lipoyl domains of lipoate-dependent enzymes. Lipoyl-ACP can also act as a substrate although octanoyl-ACP is likely to be the physiological substrate. This Bacteroides thetaiotaomicron (strain ATCC 29148 / DSM 2079 / JCM 5827 / CCUG 10774 / NCTC 10582 / VPI-5482 / E50) protein is Octanoyltransferase.